We begin with the raw amino-acid sequence, 365 residues long: 3-dehydroquinate synthase (365 aa).

NAD(+)-binding positions include 106–110 (GVIGD), 130–131 (TT), K142, K151, and 169–172 (FFAT). Zn(2+) contacts are provided by E184, H247, and H264.

The protein belongs to the sugar phosphate cyclases superfamily. Dehydroquinate synthase family. The cofactor is NAD(+). Co(2+) serves as cofactor. Zn(2+) is required as a cofactor.

It is found in the cytoplasm. It carries out the reaction 7-phospho-2-dehydro-3-deoxy-D-arabino-heptonate = 3-dehydroquinate + phosphate. Its pathway is metabolic intermediate biosynthesis; chorismate biosynthesis; chorismate from D-erythrose 4-phosphate and phosphoenolpyruvate: step 2/7. Catalyzes the conversion of 3-deoxy-D-arabino-heptulosonate 7-phosphate (DAHP) to dehydroquinate (DHQ). This chain is 3-dehydroquinate synthase, found in Listeria monocytogenes serotype 4b (strain F2365).